The sequence spans 117 residues: DNA-directed RNA polymerase subunit omega (117 aa).

Over residues 96 to 105 the composition is skewed to basic and acidic residues; that stretch reads KEEAEEEAKQ. The disordered stretch occupies residues 96–117; that stretch reads KEEAEEEAKQKNSRAAKAAAAE. Over residues 108 to 117 the composition is skewed to low complexity; sequence SRAAKAAAAE.

This sequence belongs to the RNA polymerase subunit omega family. As to quaternary structure, the RNAP catalytic core consists of 2 alpha, 1 beta, 1 beta' and 1 omega subunit. When a sigma factor is associated with the core the holoenzyme is formed, which can initiate transcription.

It carries out the reaction RNA(n) + a ribonucleoside 5'-triphosphate = RNA(n+1) + diphosphate. In terms of biological role, promotes RNA polymerase assembly. Latches the N- and C-terminal regions of the beta' subunit thereby facilitating its interaction with the beta and alpha subunits. The polypeptide is DNA-directed RNA polymerase subunit omega (Lactococcus lactis subsp. cremoris (strain SK11)).